Here is a 282-residue protein sequence, read N- to C-terminus: Glutamyl endopeptidase (282 aa).

The first 27 residues, 1 to 27, serve as a signal peptide directing secretion; the sequence is MKKRFLSICTMTIAALATTTMVNTSYA. Positions 28–66 are excised as a propeptide; it reads KTDTESHNHSSLGTENKNVLDINSSSHNIKPSQNKSYPS. Catalysis depends on charge relay system residues histidine 117, aspartate 159, and serine 235.

Belongs to the peptidase S1B family.

The protein localises to the secreted. The enzyme catalyses Preferential cleavage: Glu-|-Xaa, Asp-|-Xaa.. Functionally, exhibits a significant hydrolytic activity for the carbonyl side of glutamic acid. Shows activity toward human fibronectin and type 1 collagen. The polypeptide is Glutamyl endopeptidase (gseA) (Staphylococcus epidermidis (strain ATCC 35984 / DSM 28319 / BCRC 17069 / CCUG 31568 / BM 3577 / RP62A)).